The chain runs to 127 residues: UPF0738 protein Bsph_1225 (127 aa).

This sequence belongs to the UPF0738 family.

This chain is UPF0738 protein Bsph_1225, found in Lysinibacillus sphaericus (strain C3-41).